A 149-amino-acid polypeptide reads, in one-letter code: Arginine repressor (149 aa).

It belongs to the ArgR family.

The protein localises to the cytoplasm. The protein operates within amino-acid biosynthesis; L-arginine biosynthesis [regulation]. Its function is as follows. Regulates arginine biosynthesis genes. The protein is Arginine repressor of Geobacillus sp. (strain WCH70).